The primary structure comprises 942 residues: Probable serine/threonine-protein kinase DDB_G0279719 (942 aa).

Residues 4–617 (YEVVKLIGVG…IDLILQNKLF (614 aa)) form the Protein kinase domain. ATP is bound by residues 10 to 18 (IGVGGEAKA) and Lys33. Disordered regions lie at residues 109 to 170 (NNNQ…INNN), 247 to 303 (SFSN…NGNT), 352 to 371 (QPPQ…GADV), and 408 to 445 (NDPS…LNIN). Residues 258-272 (NSNDSNLHQSSSNSS) are compositionally biased toward low complexity. Positions 288–303 (SPGTSTPYQKGSNGNT) are enriched in polar residues. Low complexity-rich tracts occupy residues 353 to 367 (PPQS…SSPT) and 410 to 432 (PSSH…PQSP). The active-site Proton acceptor is Asp487. Positions 642–686 (TNSKSNSSNNLNNSNSNNDIINNNNNNNSSNNINNNNIVNLNNSY) are disordered. Residues 675 to 703 (NNNNIVNLNNSYNNKQDKCEQRNKSLNQN) are a coiled coil.

It belongs to the protein kinase superfamily. Ser/Thr protein kinase family.

It catalyses the reaction L-seryl-[protein] + ATP = O-phospho-L-seryl-[protein] + ADP + H(+). The enzyme catalyses L-threonyl-[protein] + ATP = O-phospho-L-threonyl-[protein] + ADP + H(+). The polypeptide is Probable serine/threonine-protein kinase DDB_G0279719 (Dictyostelium discoideum (Social amoeba)).